A 366-amino-acid polypeptide reads, in one-letter code: Phospho-N-acetylmuramoyl-pentapeptide-transferase (366 aa).

Transmembrane regions (helical) follow at residues 27-47, 76-96, 101-121, 136-156, 176-196, 205-225, 241-261, 264-284, 285-305, and 343-363; these read GAAI…ISLL, PTMG…IWVI, FFWL…WDDF, IKLL…LADP, IDIG…SSNA, GLAA…SYIS, GAGE…GFLW, CYPA…SALG, VVAI…IFVI, and AVTV…LSSL.

The protein belongs to the glycosyltransferase 4 family. MraY subfamily. The cofactor is Mg(2+).

The protein localises to the cell inner membrane. It carries out the reaction UDP-N-acetyl-alpha-D-muramoyl-L-alanyl-gamma-D-glutamyl-meso-2,6-diaminopimeloyl-D-alanyl-D-alanine + di-trans,octa-cis-undecaprenyl phosphate = di-trans,octa-cis-undecaprenyl diphospho-N-acetyl-alpha-D-muramoyl-L-alanyl-D-glutamyl-meso-2,6-diaminopimeloyl-D-alanyl-D-alanine + UMP. It functions in the pathway cell wall biogenesis; peptidoglycan biosynthesis. Functionally, catalyzes the initial step of the lipid cycle reactions in the biosynthesis of the cell wall peptidoglycan: transfers peptidoglycan precursor phospho-MurNAc-pentapeptide from UDP-MurNAc-pentapeptide onto the lipid carrier undecaprenyl phosphate, yielding undecaprenyl-pyrophosphoryl-MurNAc-pentapeptide, known as lipid I. The polypeptide is Phospho-N-acetylmuramoyl-pentapeptide-transferase (Methylacidiphilum infernorum (isolate V4) (Methylokorus infernorum (strain V4))).